The chain runs to 159 residues: Large ribosomal subunit protein uL23m (159 aa).

This sequence belongs to the universal ribosomal protein uL23 family. As to quaternary structure, component of the mitochondrial ribosome large subunit (39S) which comprises a 16S rRNA and about 50 distinct proteins.

It localises to the mitochondrion. This chain is Large ribosomal subunit protein uL23m (mrpl-23), found in Caenorhabditis elegans.